A 492-amino-acid polypeptide reads, in one-letter code: Citrate synthase, peroxisomal (492 aa).

Residues histidine 307, histidine 346, and aspartate 402 contribute to the active site. Residues 469 to 492 (PAKVRSQDSYSSATTKRYSKVTSH) are disordered. Residues 475–484 (QDSYSSATTK) are compositionally biased toward polar residues.

Belongs to the citrate synthase family.

Its subcellular location is the peroxisome. It carries out the reaction oxaloacetate + acetyl-CoA + H2O = citrate + CoA + H(+). It participates in carbohydrate metabolism; tricarboxylic acid cycle; isocitrate from oxaloacetate: step 1/2. Its function is as follows. Peroxisomal protein involved in the cellular biosynthesis of citrate, and required primarily for cell growth and modulation of multicellular development. The sequence is that of Citrate synthase, peroxisomal (cshA) from Dictyostelium discoideum (Social amoeba).